We begin with the raw amino-acid sequence, 580 residues long: MDPYCPFDALDVWEHRRFIVADSRNFITPEFPRDFWMSPVFNLPRETAAEQVVVLQAQRTAAAAALENAAMQAAELPVDIERRLRPIERNVHEIAGALEALETAAAAAEEADAARGDEPAGGGDGGAPPGLAVAEMEVQIVRNDPPLRYDTNLPVDLLHMVYAGRGATGSSGVVFGTWYRTIQDRTITDFPLTTRSADFRDGRMSKTFMTALVLSLQACGRLYVGQRHYSAFECAVLCLYLLYRNTHGAADDSDRAPVTFGDLLGRLPRYLACLAAVIGTEGGRPQYRYRDDKLPKTQFAAGGGRYEHGALASHIVIATLMHHGVLPAAPGDVPRDASTHVNPDGVAHHDDINRAAAAFLSRGHNLFLWEDQTLLRATANTITALGVIQRLLANGNVYADRLNNRLQLGMLIPGAVPSEAIARGASGSDSGAIKSGDNNLEALCANYVLPLYRADPAVELTQLFPGLAALCLDAQAGRPVGSTRRVVDMSSGARQAALVRLTALELINRTRTNPTPVGEVIHAHDALAIQYEQGLGLLAQQARIGLGSNTKRFSAFNVSSDYDMLYFLCLGFIPQYLSAV.

Interaction with major capsid protein/MCP regions lie at residues 1–49 and 1–50; these read MDPY…ETAA and MDPY…TAAE. The disordered stretch occupies residues 108–129; sequence AEEADAARGDEPAGGGDGGAPP. Residues 119-128 are compositionally biased toward gly residues; it reads PAGGGDGGAP.

This sequence belongs to the herpesviridae CVC2 protein family. As to quaternary structure, heterodimerizes with CVC1. Interacts with major capsid protein/MCP and triplex capsid protein 1/TRX1 at the pentamer vertices. Interacts with the large tegument protein/LTP. Interacts with host NUP214; this interaction might be essential to the capsid docking to the host nuclear pore. Interacts with host TMEM250.

It localises to the virion. Its subcellular location is the host nucleus. In terms of biological role, capsid vertex-specific component that plays a role during viral DNA encapsidation, assuring correct genome cleavage and presumably stabilizing capsids that contain full-length viral genomes. Participates in the interaction between the capsid and the tegument through interaction with the large tegument protein/LTP. May mediate the capsid docking to the nuclear pore allowing entry of the viral genome into the host nucleus through binding to host nucleoporins NUP214. This chain is Capsid vertex component 2, found in Human herpesvirus 1 (strain 17) (HHV-1).